The sequence spans 162 residues: Putative ankyrin repeat protein R664 (162 aa).

3 ANK repeats span residues Lys-10–Tyr-40, Asn-47–Tyr-78, and Tyr-82–Leu-111.

The protein is Putative ankyrin repeat protein R664 of Acanthamoeba polyphaga mimivirus (APMV).